Reading from the N-terminus, the 678-residue chain is DNA ligase (678 aa).

Residues 47 to 51 (DSDYD), 96 to 97 (SL), and Glu-122 contribute to the NAD(+) site. The N6-AMP-lysine intermediate role is filled by Lys-124. Arg-145, Glu-182, Lys-300, and Lys-324 together coordinate NAD(+). The Zn(2+) site is built by Cys-418, Cys-421, Cys-436, and Cys-442. The 77-residue stretch at 602–678 (AYNESFTGKT…ILEDNLKDLL (77 aa)) folds into the BRCT domain.

The protein belongs to the NAD-dependent DNA ligase family. LigA subfamily. The cofactor is Mg(2+). Mn(2+) serves as cofactor.

It catalyses the reaction NAD(+) + (deoxyribonucleotide)n-3'-hydroxyl + 5'-phospho-(deoxyribonucleotide)m = (deoxyribonucleotide)n+m + AMP + beta-nicotinamide D-nucleotide.. Its function is as follows. DNA ligase that catalyzes the formation of phosphodiester linkages between 5'-phosphoryl and 3'-hydroxyl groups in double-stranded DNA using NAD as a coenzyme and as the energy source for the reaction. It is essential for DNA replication and repair of damaged DNA. The polypeptide is DNA ligase (Francisella tularensis subsp. holarctica (strain LVS)).